Consider the following 187-residue polypeptide: Elongation factor P (187 aa).

It belongs to the elongation factor P family.

The protein localises to the cytoplasm. The protein operates within protein biosynthesis; polypeptide chain elongation. Involved in peptide bond synthesis. Stimulates efficient translation and peptide-bond synthesis on native or reconstituted 70S ribosomes in vitro. Probably functions indirectly by altering the affinity of the ribosome for aminoacyl-tRNA, thus increasing their reactivity as acceptors for peptidyl transferase. The polypeptide is Elongation factor P (Prochlorococcus marinus (strain NATL1A)).